A 624-amino-acid polypeptide reads, in one-letter code: Sodium/potassium/calcium exchanger 3 (624 aa).

The first 25 residues, 1-25 (RDLLLSQLCFLASVALLLWSLSSLR), serve as a signal peptide directing secretion. Topologically, residues 26-88 (EQKELDLMDL…DIFSNEDRRQ (63 aa)) are extracellular. Asparagine 52 and asparagine 67 each carry an N-linked (GlcNAc...) asparagine glycan. The chain crosses the membrane as a helical span at residues 89–109 (GAVVLHVLCAMYMFYALAIVC). Residues 110 to 133 (DDFFVPSLEKICERLHLSEDVAGA) are Cytoplasmic-facing. One copy of the Alpha-1 repeat lies at 130–170 (VAGATFMAAGSSAPELFTSVIGVFITKGDVGVGTIVGSAVF). Residues 134–154 (TFMAAGSSAPELFTSVIGVFI) form a helical membrane-spanning segment. Residues 155-163 (TKGDVGVGT) are Extracellular-facing. A helical membrane pass occupies residues 164-184 (IVGSAVFNILCIIGVCGLFAG). The Cytoplasmic portion of the chain corresponds to 185–191 (QVVALSS). A helical membrane pass occupies residues 192-212 (WCLLRDSIYYTLSVVALIVFI). The Extracellular portion of the chain corresponds to 213-215 (YDE). The chain crosses the membrane as a helical span at residues 216 to 236 (KVSWWESLVLVLMYLIYIIIM). The Cytoplasmic portion of the chain corresponds to 237 to 465 (KYNACIHQCF…WFMVTFASST (229 aa)). A Phosphoserine modification is found at serine 289. Positions 386–414 (AEADNETENENEDENNENDEEEDEDDDEG) are enriched in acidic residues. The interval 386 to 421 (AEADNETENENEDENNENDEEEDEDDDEGPYTPFDP) is disordered. A helical transmembrane segment spans residues 466-486 (LWIAAFSYMMVWMVTIIGYTL). Over 487–491 (GIPDV) the chain is Extracellular. Residues 492–512 (IMGITFLAAGTSVPDCMASLI) form a helical membrane-spanning segment. The Alpha-2 repeat unit spans residues 499–530 (AAGTSVPDCMASLIVARQGMGDMAVSNSIGSN). Residues 513 to 530 (VARQGMGDMAVSNSIGSN) are Cytoplasmic-facing. A helical transmembrane segment spans residues 531 to 551 (VFDILIGLGLPWALQTLAVDY). The Extracellular portion of the chain corresponds to 552-561 (GSYIRLNSRG). A helical membrane pass occupies residues 562–582 (LIYSVGLLLASVFVTVFGVHL). Topologically, residues 583–596 (NKWQLDKKLGCGCL) are cytoplasmic. The helical transmembrane segment at 597–617 (FLYGVFLCFSIMTEFNVFTFV) threads the bilayer. At 618-624 (NLPMCGD) the chain is on the extracellular side.

Belongs to the Ca(2+):cation antiporter (CaCA) (TC 2.A.19) family. SLC24A subfamily. Abundant in the brain. Expressed at low levels in the aorta, uterus and intestine.

It is found in the cell membrane. It carries out the reaction Ca(2+)(out) + K(+)(out) + 4 Na(+)(in) = Ca(2+)(in) + K(+)(in) + 4 Na(+)(out). Calcium, potassium:sodium antiporter that transports 1 Ca(2+) and 1 K(+) in exchange for 4 Na(+). This is Sodium/potassium/calcium exchanger 3 (Slc24a3) from Rattus norvegicus (Rat).